The primary structure comprises 403 residues: Putative gustatory receptor 98b (403 aa).

Topologically, residues 1–11 (MVAQKSRLLAR) are cytoplasmic. Residues 12–32 (AFPYLDIFSVFALTPPPQSFG) form a helical membrane-spanning segment. Residues 33-48 (HTPHRRLRWYLMTGYV) are Extracellular-facing. A helical transmembrane segment spans residues 49 to 69 (FYATAILATVFIVSYFNIIAI). At 70–83 (DEEVLEYNVSDFTR) the chain is on the cytoplasmic side. The chain crosses the membrane as a helical span at residues 84-104 (VMGNIQKSLYSIMAIANHLNM). Residues 105–144 (LINYRRLGGIYKDIADLEMDMDEASQCFGGQRQRFSFRFR) are Extracellular-facing. A helical membrane pass occupies residues 145–165 (MALCVGVWMILMVGSMPRLTM). At 166 to 191 (TAMGPFVSTLLKILTEFVMIMQQLKS) the chain is on the cytoplasmic side. A helical membrane pass occupies residues 192–212 (LEYCVFVLIIYELVLRLRRTL). Topologically, residues 213–259 (SQLQEEFQDCEQQDMLQALCVALKRNQLLLGRIWRLEGDVGSYFTPT) are extracellular. Residues 260–280 (MLLLFLYNGLTILHMVNWAYI) form a helical membrane-spanning segment. At 281-365 (NKFLYDSCCQ…LRFTCGGLFD (85 aa)) the chain is on the cytoplasmic side. Residues 366–386 (INLKYFGGLLVTIFGYIIILI) traverse the membrane as a helical segment. The Extracellular portion of the chain corresponds to 387-403 (QFKVQAIAANRYKKVVN).

It belongs to the insect chemoreceptor superfamily. Gustatory receptor (GR) family. Gr2a subfamily.

Its subcellular location is the cell membrane. Functionally, probable gustatory receptor which mediates acceptance or avoidance behavior, depending on its substrates. The chain is Putative gustatory receptor 98b (Gr98b) from Drosophila melanogaster (Fruit fly).